A 201-amino-acid chain; its full sequence is Probable nicotinate-nucleotide adenylyltransferase (201 aa).

The protein belongs to the NadD family.

The catalysed reaction is nicotinate beta-D-ribonucleotide + ATP + H(+) = deamido-NAD(+) + diphosphate. Its pathway is cofactor biosynthesis; NAD(+) biosynthesis; deamido-NAD(+) from nicotinate D-ribonucleotide: step 1/1. Functionally, catalyzes the reversible adenylation of nicotinate mononucleotide (NaMN) to nicotinic acid adenine dinucleotide (NaAD). In Clostridium botulinum (strain Langeland / NCTC 10281 / Type F), this protein is Probable nicotinate-nucleotide adenylyltransferase.